A 441-amino-acid chain; its full sequence is Putative T-box protein 32 (441 aa).

Residues 18 to 199 (NVIGSSRTSD…TGPSAKKTPE (182 aa)) constitute a DNA-binding region (T-box). The disordered stretch occupies residues 268–289 (SLSSPAALQQDSTVSSDNDFDD). Over residues 273-284 (AALQQDSTVSSD) the composition is skewed to polar residues.

It localises to the nucleus. The polypeptide is Putative T-box protein 32 (tbx-32) (Caenorhabditis elegans).